The following is a 285-amino-acid chain: Protease HtpX homolog (285 aa).

Helical transmembrane passes span 7 to 27 (TAMLMAAITALFIVIGGMIGG) and 30 to 50 (GMTIALLFALGMNFFSYWFSD). His-131 is a Zn(2+) binding site. Residue Glu-132 is part of the active site. His-135 serves as a coordination point for Zn(2+). Transmembrane regions (helical) follow at residues 146 to 166 (ITATMAGAISAIANFAMFFGG) and 177 to 197 (IAGIAVALLAPIAGALIQMAI). Residue Glu-202 participates in Zn(2+) binding.

Belongs to the peptidase M48B family. Requires Zn(2+) as cofactor.

It is found in the cell inner membrane. The chain is Protease HtpX homolog from Burkholderia multivorans (strain ATCC 17616 / 249).